We begin with the raw amino-acid sequence, 231 residues long: E3 ubiquitin-protein ligase At3g02290 (231 aa).

Residues G103–S118 are compositionally biased toward basic and acidic residues. The interval G103–F125 is disordered. The RING-type; atypical zinc finger occupies C181–G222.

Its subcellular location is the cytoplasm. It catalyses the reaction S-ubiquitinyl-[E2 ubiquitin-conjugating enzyme]-L-cysteine + [acceptor protein]-L-lysine = [E2 ubiquitin-conjugating enzyme]-L-cysteine + N(6)-ubiquitinyl-[acceptor protein]-L-lysine.. Its pathway is protein modification; protein ubiquitination. In terms of biological role, mediates E2-dependent protein ubiquitination. This Arabidopsis thaliana (Mouse-ear cress) protein is E3 ubiquitin-protein ligase At3g02290.